The sequence spans 530 residues: PC4 and SFRS1-interacting protein (530 aa).

One can recognise a PWWP domain in the interval 1 to 64; sequence MTRDFKPGDL…PKDIFPYSEN (64 aa). A Glycyl lysine isopeptide (Lys-Gly) (interchain with G-Cter in SUMO2) cross-link involves residue Lys75. The segment at 86–349 is disordered; the sequence is NNPKVKFSSQ…VEKKRETSMD (264 aa). The span at 92–104 shows a compositional bias: polar residues; sequence FSSQQASTKQSNA. 3 positions are modified to phosphoserine: Ser102, Ser105, and Ser106. Residues 113–135 show a composition bias toward basic and acidic residues; that stretch reads KETSVSKEDTDHEEKASNEDVTK. A phosphothreonine mark is found at Thr115 and Thr122. A Phosphoserine modification is found at Ser129. At Thr141 the chain carries Phosphothreonine. Residues 144-153 are compositionally biased toward basic residues; the sequence is AARRGRKRKA. Positions 146-156 match the Nuclear localization signal motif; the sequence is RRGRKRKAEKQ. Thr167 is subject to Phosphothreonine. Phosphoserine occurs at positions 177 and 206. Over residues 213 to 261 the composition is skewed to basic and acidic residues; the sequence is EEDKSKKKGQEEKQPKKQLKKDEEGQKEEDKPRKEPDKKEGKKEVESKR. Phosphoserine is present on Ser271. Phosphothreonine is present on Thr272. 2 positions are modified to phosphoserine: Ser273 and Ser275. A compositionally biased stretch (acidic residues) spans 274-283; it reads DSEEEGDDQE. The segment covering 287 to 302 has biased composition (basic residues); that stretch reads KRKGGRNFQTAHRRNM. Residues 305-349 are compositionally biased toward basic and acidic residues; it reads GQHEKEAADRKRKQEEQMETEQQNKDEGKKPEVKKVEKKRETSMD. Coiled-coil stretches lie at residues 306–334 and 371–395; these read QHEKEAADRKRKQEEQMETEQQNKDEGKK and NRCIEALDELASLQVTMQQAQKHTE. Residues 340–417 are integrase-binding domain (IBD); the sequence is VEKKRETSMD…VSQIIMEKST (78 aa). Ser434 is modified (phosphoserine). Phosphothreonine is present on Thr437. Ser443 bears the Phosphoserine mark. A compositionally biased stretch (basic and acidic residues) spans 446 to 473; it reads EQRQHEEANKTKDQGKKGPNKKLDKEQT. The segment at 446–530 is disordered; that stretch reads EQRQHEEANK…ISLKDSTLDN (85 aa). A compositionally biased stretch (polar residues) spans 474–494; it reads GSKTLNGGSDAPDSNQAQHNG. Positions 498 to 530 are enriched in basic and acidic residues; that stretch reads EESKDKHEASSKKKPSNEERETEISLKDSTLDN. Arg517 bears the Citrulline mark. Ser522 carries the post-translational modification Phosphoserine. The residue at position 527 (Thr527) is a Phosphothreonine.

Belongs to the HDGF family. In terms of assembly, monomer. Interacts with IFRD1/PC4. Interacts (via IBD domain) with POGZ (via IBM motif) and CDCA7L (via IBM motifs). Interacts (via IBD domain) with KMT2A (via IBM motifs) with a moderate affinity whereas interacts with the KMT2A-MEN1 complex with a greater affinity; MEN1 enhances interaction of KMT2A with PSIP1. Interacts (via IBD domain) with IWS1 (via IBM motif), MED1 (via IBM motif) and DBF4 (via IBM motifs). (Microbial infection) Interacts (via IBD domain) with feline immunodeficiency virus (FIV) integrase (IN), determining its nuclear localization, its tight association with chromatin and its protection from the proteasome. In terms of processing, citrullinated by PADI4.

The protein localises to the nucleus. Functionally, transcriptional coactivator involved in neuroepithelial stem cell differentiation and neurogenesis. Involved in particular in lens epithelial cell gene regulation and stress responses. May play an important role in lens epithelial to fiber cell terminal differentiation. May play a protective role during stress-induced apoptosis. This chain is PC4 and SFRS1-interacting protein (PSIP1), found in Felis catus (Cat).